A 285-amino-acid chain; its full sequence is Complex I assembly factor TIMMDC1, mitochondrial (285 aa).

Helical transmembrane passes span 80–100 (AAVSAGIIGWAYGGIPAFIYA), 137–159 (RWSWRTAVFVTIFNTVNTGLTVY), 165–185 (MSHFAIAGAVTGGLFRINLGV), and 188–208 (LVAGSIIGALLGAPMGSLLMA). Residues 265–285 (RIEELLSLPRNPSSPHQQSKH) form a disordered region. The segment covering 274–285 (RNPSSPHQQSKH) has biased composition (polar residues). Phosphoserine is present on Ser277.

This sequence belongs to the Tim17/Tim22/Tim23 family. As to quaternary structure, associates with the intermediate 315 kDa subcomplex of incompletely assembled complex I. Interacts with TMEM70.

It localises to the mitochondrion membrane. Its function is as follows. Chaperone protein involved in the assembly of the mitochondrial NADH:ubiquinone oxidoreductase complex (complex I). Participates in constructing the membrane arm of complex I. The polypeptide is Complex I assembly factor TIMMDC1, mitochondrial (Mus musculus (Mouse)).